Here is an 814-residue protein sequence, read N- to C-terminus: Ubiquitin carboxyl-terminal hydrolase 45 (814 aa).

Residues 1-14 are compositionally biased toward basic and acidic residues; that stretch reads MRVKDPTKALPEKA. The tract at residues 1-28 is disordered; sequence MRVKDPTKALPEKAKRSKRPTVPHDEDS. The tract at residues 1-62 is interaction with ERCC1; the sequence is MRVKDPTKAL…AIAENLWSVC (62 aa). Serine 28 and serine 29 each carry phosphoserine. The UBP-type zinc-finger motif lies at 36–153; it reads LTCQHVSHAI…AQIVDFLQKH (118 aa). 12 residues coordinate Zn(2+): cysteine 38, histidine 40, cysteine 62, cysteine 65, cysteine 85, cysteine 88, cysteine 93, histidine 101, histidine 105, histidine 114, cysteine 127, and cysteine 130. One can recognise a USP domain in the interval 190-813; the sequence is RGITNLGNTC…QAYLLFYERV (624 aa). Cysteine 199 (nucleophile) is an active-site residue. 2 disordered regions span residues 418–443 and 479–533; these read IENI…IHDR and ESRL…PDGP. Residues 432–443 show a composition bias toward basic and acidic residues; sequence SSKDKSQLIHDR. Phosphoserine occurs at positions 508 and 526. Positions 515-527 are enriched in polar residues; the sequence is KQTGLFRSSSGSG. Histidine 746 serves as the catalytic Proton acceptor.

It belongs to the peptidase C19 family. As to quaternary structure, interacts with ERCC1. The catalytically active form interacts with SPDL1. As to expression, widely expressed. High expression is detected in the cerebellum. In the eye, it is expressed at high levels in the optic nerve, sclera and retina, with relatively low levels in the choroid, lens and retinal pigment epithelium.

It is found in the photoreceptor inner segment. The protein localises to the cytoplasm. It localises to the nucleus. It catalyses the reaction Thiol-dependent hydrolysis of ester, thioester, amide, peptide and isopeptide bonds formed by the C-terminal Gly of ubiquitin (a 76-residue protein attached to proteins as an intracellular targeting signal).. Its function is as follows. Catalyzes the deubiquitination of SPDL1. Plays a role in the repair of UV-induced DNA damage via deubiquitination of ERCC1, promoting its recruitment to DNA damage sites. May be involved in the maintenance of photoreceptor function. May play a role in normal retinal development. Plays a role in cell migration. The sequence is that of Ubiquitin carboxyl-terminal hydrolase 45 (USP45) from Homo sapiens (Human).